The chain runs to 42 residues: Potassium channel toxin gamma-KTx 1.4 (42 aa).

Intrachain disulfides connect C5–C23, C11–C34, C20–C39, and C24–C41.

This sequence belongs to the ergtoxin family. Gamma-KTx 1 subfamily. In terms of tissue distribution, expressed by the venom gland.

The protein localises to the secreted. In terms of biological role, blocks Kv11/ERG potassium channels. The protein is Potassium channel toxin gamma-KTx 1.4 of Centruroides sculpturatus (Arizona bark scorpion).